A 1165-amino-acid polypeptide reads, in one-letter code: Adhesion G-protein coupled receptor G6 (1165 aa).

Positions Met-1–Cys-30 are cleaved as a signal peptide. The Extracellular segment spans residues Val-31–Lys-832. An intrachain disulfide couples Cys-41 to Cys-67. The CUB domain occupies Cys-41 to Val-149. Ca(2+) contacts are provided by Glu-89 and Asp-97. Cys-94 and Cys-111 are oxidised to a cystine. N-linked (GlcNAc...) asparagine glycosylation is present at Asn-121. Asp-134, Ser-136, and Ile-137 together coordinate Ca(2+). Residue Asn-143 is glycosylated (N-linked (GlcNAc...) asparagine). The region spanning Arg-154 to Cys-356 is the Pentraxin (PTX) domain. 2 disulfides stabilise this stretch: Cys-186-Cys-254 and Cys-231-Cys-277. N-linked (GlcNAc...) asparagine glycosylation is found at Asn-258, Asn-314, Asn-324, Asn-353, Asn-370, Asn-410, Asn-417, Asn-424, Asn-458, Asn-462, and Asn-478. The mediates interaction with laminin-2 stretch occupies residues Asp-446 to Cys-807. Intrachain disulfides connect Cys-498–Cys-533 and Cys-521–Cys-550. N-linked (GlcNAc...) asparagine glycans are attached at residues Asn-536, Asn-549, Asn-563, Asn-570, Asn-665, Asn-674, Asn-720, Asn-746, Asn-781, and Asn-788. Residues Pro-640 to Ala-823 form the GAIN-B domain. Cystine bridges form between Cys-773/Cys-805 and Cys-792/Cys-807. Positions Cys-773–Ala-823 are GPS. The segment at His-812–Pro-820 is stachel. A helical membrane pass occupies residues Val-833–Leu-853. At Leu-854–Asn-873 the chain is on the cytoplasmic side. Residues Leu-874–Phe-894 traverse the membrane as a helical segment. At Gly-895–Leu-899 the chain is on the extracellular side. A helical membrane pass occupies residues Cys-900 to Leu-920. Over Glu-921–Tyr-940 the chain is Cytoplasmic. Residues Ile-941–Val-961 form a helical membrane-spanning segment. Over Ser-962–Ser-994 the chain is Extracellular. The chain crosses the membrane as a helical span at residues Cys-995 to Val-1015. Over Gln-1016–Ser-1039 the chain is Cytoplasmic. Residues Val-1040 to Pro-1060 form a helical membrane-spanning segment. The Extracellular segment spans residues Leu-1061–Asn-1062. A helical membrane pass occupies residues Ile-1063–Phe-1083. Residue Asn-1073 coordinates 17alpha-hydroxyprogesterone. The Cytoplasmic segment spans residues His-1084 to Ser-1165. Residues Asn-1126 to Tyr-1154 show a composition bias toward low complexity. The tract at residues Asn-1126–Ser-1165 is disordered. Residues Ser-1135 and Ser-1138 each carry the phosphoserine modification.

Belongs to the G-protein coupled receptor 2 family. Adhesion G-protein coupled receptor (ADGR) subfamily. In terms of assembly, heterodimer of 2 chains generated by proteolytic processing; the large extracellular N-terminal fragment and the membrane-bound C-terminal fragment predominantly remain associated and non-covalently linked. Interacts with Laminin-2; this interaction stabilizes the receptor in an inactive state. Laminin-2 polymerization could facilitate ADGRG6-NTF removal, thereby exposing the tethered agonist to drive myelination. Interacts with PRNP. Interacts with ITGB1. Interacts with LRP1. Post-translationally, proteolytically cleaved into 2 conserved sites: one in the GPS region of the GAIN-B domain (S1 site) and the other in the middle of the extracellular domain (S2 site). The proteolytic cleavage at S1 site generates an extracellular subunit and a seven-transmembrane subunit. Furin is involved in the cleavage of the S2 site generating a soluble fragment. Processing at the GPS region occurred independent of and probably prior to the cleavage at the S2 site. Proteolytic cleavage is required for activation of the receptor. As to expression, expressed at high levels in the heart, somite and otic vesicle during embryogenesis and in adult lung.

The protein resides in the cell membrane. With respect to regulation, forms a heterodimer of 2 chains generated by proteolytic processing that remain associated through non-covalent interactions mediated by the GAIN-B domain. In the inactivated receptor, the Stachel sequence (also named stalk) is embedded in the GAIN-B domain, where it adopts a beta-strand conformation. On activation, the Stachel moves into the 7 transmembrane region and adopts a twisted hook-shaped configuration that forms contacts within the receptor, leading to coupling of a G-alpha protein, which activates signaling. The cleaved GAIN-B and N-terminal domains can then dissociate from the rest of the receptor. Adhesion G-protein coupled receptor (aGPCR) for steroid hormones, such as progesterone and 17alpha-hydroxyprogesterone (17OHP). Involved in many biological processes, such as myelination, sprouting angiogenesis, placenta, ear and cartilage development. Ligand binding causes a conformation change that triggers signaling via guanine nucleotide-binding proteins (G proteins) and modulates the activity of downstream effectors, such as adenylate cyclase. ADGRG6 is coupled to G(i) G alpha proteins and mediates inhibition of adenylate cyclase. Also able to couple to G(q) G proteins. Involved in myelination of the peripheral nervous system: required for differentiation of promyelinating Schwann cells and for normal myelination of axons. Also acts as a regulator of body length and bone mass. Acts as a regulator of blood-brain barrier formation in the central nervous system vie its association with LRP1 and ITGB1. This is Adhesion G-protein coupled receptor G6 from Mus musculus (Mouse).